A 571-amino-acid polypeptide reads, in one-letter code: Putative fatty-acid--CoA ligase fadD11 (571 aa).

Over residues 1 to 19 (MARLRGAGAAGRCRPGRFG) the composition is skewed to low complexity. 2 disordered regions span residues 1-35 (MARL…EPDR) and 67-91 (RQRG…RCAH). Positions 78 to 91 (ATVRRSRSRQRCAH) are enriched in basic residues. 2 consecutive transmembrane segments (helical) span residues 314–334 (TLAF…MSEL) and 431–451 (ANIE…MAIG).

The protein belongs to the ATP-dependent AMP-binding enzyme family.

It localises to the cell membrane. The protein is Putative fatty-acid--CoA ligase fadD11 (fadD11) of Mycobacterium tuberculosis (strain CDC 1551 / Oshkosh).